A 231-amino-acid polypeptide reads, in one-letter code: Ribosomal RNA large subunit methyltransferase E (231 aa).

Residues glycine 76, tryptophan 78, aspartate 99, aspartate 115, and aspartate 139 each contribute to the S-adenosyl-L-methionine site. Lysine 179 acts as the Proton acceptor in catalysis.

The protein belongs to the class I-like SAM-binding methyltransferase superfamily. RNA methyltransferase RlmE family.

It localises to the cytoplasm. It carries out the reaction uridine(2552) in 23S rRNA + S-adenosyl-L-methionine = 2'-O-methyluridine(2552) in 23S rRNA + S-adenosyl-L-homocysteine + H(+). Its function is as follows. Specifically methylates the uridine in position 2552 of 23S rRNA at the 2'-O position of the ribose in the fully assembled 50S ribosomal subunit. In Bradyrhizobium sp. (strain ORS 278), this protein is Ribosomal RNA large subunit methyltransferase E.